The primary structure comprises 165 residues: Bark lectin isoform 1 (165 aa).

2 N-linked (GlcNAc...) asparagine glycosylation sites follow: asparagine 27 and asparagine 57. Cystine bridges form between cysteine 33–cysteine 80 and cysteine 126–cysteine 133.

The protein belongs to the protease inhibitor I3 (leguminous Kunitz-type inhibitor) family. In terms of assembly, dimer.

Its function is as follows. Glucose and N-acetylglucosamine binding lectin. Has hemagglutinating activity against human and rabbit erythrocytes which does not require divalent cations. Inhibits factor Xa and, to a lesser extent, trypsin. Does not inhibit neutrophil elastase, human plasma kallikrein, papain, human plasmin, porcine pancreatic kallikrein and bovin chymotrypsin. Has insecticidal activity against the termite species N.corniger. Induces apoptosis in prostrate cancer cell lines DU145 and PC3. This chain is Bark lectin isoform 1, found in Crateva tapia (Garlic-pear tree).